A 423-amino-acid chain; its full sequence is 26S proteasome regulatory subunit 6B homolog (423 aa).

207-214 (GPPGTGKT) is an ATP binding site.

It belongs to the AAA ATPase family.

It is found in the cytoplasm. The protein localises to the nucleus. The 26S proteasome is involved in the ATP-dependent degradation of ubiquitinated proteins. The regulatory (or ATPase) complex confers ATP dependency and substrate specificity to the 26S complex. This chain is 26S proteasome regulatory subunit 6B homolog (tbpA), found in Aspergillus niger.